Reading from the N-terminus, the 469-residue chain is 3-isopropylmalate dehydratase large subunit (469 aa).

[4Fe-4S] cluster-binding residues include Cys350, Cys410, and Cys413.

Belongs to the aconitase/IPM isomerase family. LeuC type 1 subfamily. As to quaternary structure, heterodimer of LeuC and LeuD. Requires [4Fe-4S] cluster as cofactor.

The enzyme catalyses (2R,3S)-3-isopropylmalate = (2S)-2-isopropylmalate. Its pathway is amino-acid biosynthesis; L-leucine biosynthesis; L-leucine from 3-methyl-2-oxobutanoate: step 2/4. In terms of biological role, catalyzes the isomerization between 2-isopropylmalate and 3-isopropylmalate, via the formation of 2-isopropylmaleate. The protein is 3-isopropylmalate dehydratase large subunit of Rhodopseudomonas palustris (strain ATCC BAA-98 / CGA009).